A 325-amino-acid polypeptide reads, in one-letter code: uncharacterized protein (325 aa).

The interval 296 to 325 (QRTLSSSMEEADRPRRMSVTQPHLPPVPSA) is disordered.

Belongs to the NDRG family.

This is an uncharacterized protein from Caenorhabditis elegans.